The chain runs to 1148 residues: Trafficking protein particle complex subunit 9 (1148 aa).

A phosphoserine mark is found at Ser566 and Ser953.

This sequence belongs to the NIBP family. In terms of assembly, component of the multisubunit TRAPP (transport protein particle) complex, which includes at least TRAPPC2, TRAPPC2L, TRAPPC3, TRAPPC3L, TRAPPC4, TRAPPC5, TRAPPC8, TRAPPC9, TRAPPC10, TRAPPC11 and TRAPPC12. Directly interacts with IKBKB and MAP3K14. In terms of tissue distribution, expressed in neurons of the pyramidal layer of the cortex, in spinal cord motor neurons and white matter neurons (at protein level).

Its subcellular location is the golgi apparatus. The protein localises to the cis-Golgi network. It is found in the endoplasmic reticulum. The protein resides in the cytoplasm. In terms of biological role, functions as an activator of NF-kappa-B through increased phosphorylation of the IKK complex. May function in neuronal cells differentiation. May play a role in vesicular transport from endoplasmic reticulum to Golgi. This Mus musculus (Mouse) protein is Trafficking protein particle complex subunit 9 (Trappc9).